The sequence spans 771 residues: Putative 8-amino-7-oxononanoate synthase 2 (771 aa).

A unknown region spans residues 1–418 (MPTGLGYDFL…TVKAAELGEI (418 aa)). Arginine 407 is a substrate binding site. The interval 419–771 (VLLGTNSYLG…EDLTPQGAAL (353 aa)) is KAPA synthase. Residue 485 to 486 (GY) participates in pyridoxal 5'-phosphate binding. Residue histidine 510 participates in substrate binding. Residues serine 556 and 581 to 584 (DESH) each bind pyridoxal 5'-phosphate. Lysine 615 carries the post-translational modification N6-(pyridoxal phosphate)lysine.

In the C-terminal section; belongs to the class-II pyridoxal-phosphate-dependent aminotransferase family. BioF subfamily. It depends on pyridoxal 5'-phosphate as a cofactor.

It carries out the reaction 6-carboxyhexanoyl-[ACP] + L-alanine + H(+) = (8S)-8-amino-7-oxononanoate + holo-[ACP] + CO2. In terms of biological role, catalyzes the decarboxylative condensation of pimeloyl-[acyl-carrier protein] and L-alanine to produce 8-amino-7-oxononanoate (AON), [acyl-carrier protein], and carbon dioxide. This is Putative 8-amino-7-oxononanoate synthase 2 (bioF2) from Mycobacterium tuberculosis (strain CDC 1551 / Oshkosh).